Reading from the N-terminus, the 372-residue chain is Glutamate 5-kinase (372 aa).

Lys-14 provides a ligand contact to ATP. Residues Ser-54, Asp-141, and Asn-153 each coordinate substrate. 173–174 is a binding site for ATP; that stretch reads TD. Residues 280 to 358 form the PUA domain; the sequence is RGHVVIDAGA…GEIETVLGYM (79 aa).

The protein belongs to the glutamate 5-kinase family.

It is found in the cytoplasm. It carries out the reaction L-glutamate + ATP = L-glutamyl 5-phosphate + ADP. It functions in the pathway amino-acid biosynthesis; L-proline biosynthesis; L-glutamate 5-semialdehyde from L-glutamate: step 1/2. Functionally, catalyzes the transfer of a phosphate group to glutamate to form L-glutamate 5-phosphate. This chain is Glutamate 5-kinase, found in Burkholderia orbicola (strain AU 1054).